The chain runs to 467 residues: MRLPREIGPIHFVGIGGIGMSGIAEVLCNLGYTVQGSDASEGANVSRLRDKGIAIHVGHQAENVAGADVVVVSTAIKRDNPELLAARAQRIPVVRRAEMLAELMRLKSCVAIAGTHGKTTTTSMVAALLDAGEFDPTVINGGIINAYGTNARLGAGEWMVVEADESDGTFLKLPADVAIVTNVDPEHLDHFKTFDAVQEAFRDFVENVPFYGFAVMCIDHPVVQALVGKIEDRRIITYGENPQADVRLLDLTPNGGSSAFRVAFRDRKAGTAHEIADLVLPMPGRHNALNATAAIAVAHELGLSDDTIRKALAGFGGVRRRFTKTGEWNGVTIIDDYGHHPVEIAAVLKAARESTKGKVIAVVQPHRFTRLQSLFEEFCTCFNDADVVVVAEVYPAGEAPIEGVDRDHFVLGLRAHGHREVIPLQESAALASVVYGAAHSGDYVVCLGAGNITQWAYALPGELKALD.

114-120 (GTHGKTT) is a binding site for ATP.

It belongs to the MurCDEF family.

It localises to the cytoplasm. It catalyses the reaction UDP-N-acetyl-alpha-D-muramate + L-alanine + ATP = UDP-N-acetyl-alpha-D-muramoyl-L-alanine + ADP + phosphate + H(+). It functions in the pathway cell wall biogenesis; peptidoglycan biosynthesis. Functionally, cell wall formation. This Rhodopseudomonas palustris (strain BisB18) protein is UDP-N-acetylmuramate--L-alanine ligase.